The sequence spans 731 residues: Zinc finger protein 615 (731 aa).

The region spanning 8–79 (LTLEDVAVDF…EDEIYSRICS (72 aa)) is the KRAB domain. C2H2-type zinc fingers lie at residues 204–226 (HVCSECGKAFLKLSQFIDHQRVH), 232–254 (HVCSMCGKAFSRKSRLMDHQRTH), 260–282 (YECTECDKTFLKKSQLNIHQKTH), 288–310 (YTCSQCGKAFIKKCRLIYHQRTH), 316–338 (HGCSVCGKAFSTKFSLTTHQKTH), 344–366 (YICSECGKGFIEKRRLTAHHRTH), 372–394 (FICNKCGKGFTLKNSLITHQQTH), 400–422 (YTCSECGKGFSMKHCLMVHQRTH), 428–450 (YKCNECGKGFALKSPLIRHQRTH), 456–478 (YVCTECRKGFTMKSDLIVHQRTH), 484–506 (YICNDCGKGFTVKSRLIVHQRTH), 512–534 (YVCGECGKGFPAKIRLMGHQRTH), 540–562 (YICNECGKGFTEKSHLNVHRRTH), 568–590 (YVCSECGKGLTGKSMLIAHQRTH), 596–618 (YICNECGKGFTMKSTLSIHQQTH), 624–646 (YKCNECDKTFRKKTCLIQHQRFH), 652–674 (FACTECGKFSLRKNDLITHQRIH), 680–702 (YKCSDCGKAFTTKSGLNVHQRKH), and 708–730 (YGCSDCGKAFAHLSILVKHRRIH).

The protein belongs to the krueppel C2H2-type zinc-finger protein family.

It is found in the nucleus. Its function is as follows. May be involved in transcriptional regulation. The chain is Zinc finger protein 615 (ZNF615) from Homo sapiens (Human).